The sequence spans 724 residues: MADEEIKPTSSIEAGGGQNNEHEHGMTSLPNLPSTREETPRELSPVAGSSRAQSTGEQGVKPLKRFDTLPTRRSQLSPDTRRRGRTLTGQVPQDNDLSSRRQVFRRGTSVLSGESGDRMRSIPERGPVPPTTERESRPSGVSDRTQASGLRPRRSTTSRQRGPSIRRRPTVALEAVTSGADVGGGDNFTLAGPAPIETSAQNQPYVDPGYAHLNPAYVQPENVRPVWGLAKPLPRVVRPGMIPSRTEINMAQQQQQQQQQQPQNQADVDLEQGRIEPTLKLSRISTALQNARQQRENNLMEAHGLVSPTNLQTTASRQEPLTAPSQVIEEEDLADKPTNTDTTSPERPPTRPPLSFDGRPSQTSQNSQNEPFPALSDHDDQESVATEVAGPDDLDGEWIGQEIPLVAYDPNYDDEIHNLHTHWSVIRLRFREPLAELLAVTCQLTLGFCADLVVVTSGKNASPAGNEATTDWAWGLASMLGIYIAGGISGAHLNPAISIMLWIYRGFPLRKVPMYVLAQILGAFIAALISFGLYQTNIVEYGGTDLKTSDTMGAFITYPRYPWINASTSFFTEFVGTAILAVAVLALGDDMNAPPGAGMSAFILGLVITVLSMAFGYNTGAALNPSRDLGPRLALAALGYGKDLFTDVYWIWGNWCAPILGAIFGAFLYDAAIFAGGESPVNYPRKRIKRAGHKWRKKWGVRLRKMKPAKKGEDEAYRRWKESQ.

Disordered regions lie at residues 1-167 (MADE…SIRR), 248-267 (INMAQQQQQQQQQQPQNQAD), and 302-396 (AHGL…DLDG). Residues 1-434 (MADEEIKPTS…VIRLRFREPL (434 aa)) are Cytoplasmic-facing. The segment covering 87–96 (LTGQVPQDND) has biased composition (polar residues). Residues 252 to 265 (QQQQQQQQQQPQNQ) show a composition bias toward low complexity. 2 stretches are compositionally biased toward polar residues: residues 307–325 (SPTNLQTTASRQEPLTAPS) and 360–370 (PSQTSQNSQNE). A helical membrane pass occupies residues 435 to 455 (AELLAVTCQLTLGFCADLVVV). Residues 456–472 (TSGKNASPAGNEATTDW) lie on the Extracellular side of the membrane. Residues 473–493 (AWGLASMLGIYIAGGISGAHL) traverse the membrane as a helical segment. The short motif at 494 to 496 (NPA) is the NPA 1 element. The Cytoplasmic segment spans residues 494–513 (NPAISIMLWIYRGFPLRKVP). A helical transmembrane segment spans residues 514–534 (MYVLAQILGAFIAALISFGLY). Residues 535 to 567 (QTNIVEYGGTDLKTSDTMGAFITYPRYPWINAS) lie on the Extracellular side of the membrane. Asn-565 carries N-linked (GlcNAc...) asparagine glycosylation. A helical membrane pass occupies residues 568-588 (TSFFTEFVGTAILAVAVLALG). The Cytoplasmic portion of the chain corresponds to 589–595 (DDMNAPP). Residues 596–616 (GAGMSAFILGLVITVLSMAFG) traverse the membrane as a helical segment. The Extracellular segment spans residues 617–647 (YNTGAALNPSRDLGPRLALAALGYGKDLFTD). The short motif at 624–626 (NPS) is the NPA 2 element. Residues 648 to 668 (VYWIWGNWCAPILGAIFGAFL) form a helical membrane-spanning segment. Residues 669-724 (YDAAIFAGGESPVNYPRKRIKRAGHKWRKKWGVRLRKMKPAKKGEDEAYRRWKESQ) are Cytoplasmic-facing.

This sequence belongs to the MIP/aquaporin (TC 1.A.8) family.

The protein localises to the membrane. The enzyme catalyses H2O(in) = H2O(out). It carries out the reaction glycerol(in) = glycerol(out). Its function is as follows. Water channel required to facilitate the transport of water across membranes. May play a role in the vegetative growth. This is Aquaglyceroporin-4 from Botryotinia fuckeliana (strain B05.10) (Noble rot fungus).